The chain runs to 79 residues: Defensin-like protein 54 (79 aa).

The signal sequence occupies residues 1-27 (MGIKKTSATVFLVIILTISFSYYDVEA). Cystine bridges form between Cys-39–Cys-76, Cys-43–Cys-67, Cys-52–Cys-74, and Cys-56–Cys-75.

This sequence belongs to the DEFL family.

It is found in the secreted. In Arabidopsis thaliana (Mouse-ear cress), this protein is Defensin-like protein 54.